Reading from the N-terminus, the 344-residue chain is tRNA N6-adenosine threonylcarbamoyltransferase (344 aa).

The Fe cation site is built by histidine 115 and histidine 119. Substrate is bound by residues 137-141 (LVSGG), aspartate 170, glycine 183, aspartate 187, and asparagine 276. A Fe cation-binding site is contributed by aspartate 306.

The protein belongs to the KAE1 / TsaD family. The cofactor is Fe(2+).

It localises to the cytoplasm. It catalyses the reaction L-threonylcarbamoyladenylate + adenosine(37) in tRNA = N(6)-L-threonylcarbamoyladenosine(37) in tRNA + AMP + H(+). Functionally, required for the formation of a threonylcarbamoyl group on adenosine at position 37 (t(6)A37) in tRNAs that read codons beginning with adenine. Is involved in the transfer of the threonylcarbamoyl moiety of threonylcarbamoyl-AMP (TC-AMP) to the N6 group of A37, together with TsaE and TsaB. TsaD likely plays a direct catalytic role in this reaction. The chain is tRNA N6-adenosine threonylcarbamoyltransferase from Limosilactobacillus fermentum (strain NBRC 3956 / LMG 18251) (Lactobacillus fermentum).